The primary structure comprises 627 residues: Chaperone protein HtpG (627 aa).

The tract at residues methionine 1 to arginine 343 is a; substrate-binding. The segment at glutamate 344–lysine 553 is b. A c region spans residues valine 554–serine 627.

It belongs to the heat shock protein 90 family. In terms of assembly, homodimer.

The protein localises to the cytoplasm. In terms of biological role, molecular chaperone. Has ATPase activity. The chain is Chaperone protein HtpG from Natranaerobius thermophilus (strain ATCC BAA-1301 / DSM 18059 / JW/NM-WN-LF).